Consider the following 520-residue polypeptide: Serine/threonine-protein kinases drp72 (520 aa).

Residues 20–281 (YTLQWIVGHG…NELARAVSAV (262 aa)) form the Protein kinase domain. Residues 26–34 (VGHGGMSTV) and K49 each bind ATP. D148 (proton acceptor) is an active-site residue. 2 disordered regions span residues 315 to 334 (ARPT…RQEK) and 366 to 504 (SGDS…DAAD). The segment covering 374-394 (TPETITQTVTPTETTTSEEPT) has biased composition (low complexity). Positions 395-411 (LAPPPVQPTRQPVPTPD) are enriched in pro residues. Residues 416–429 (RLPTTTQESPTRVS) show a composition bias toward polar residues. A compositionally biased stretch (low complexity) spans 440–449 (EQTTPGGQPP). The span at 450 to 460 (LSTLPTSLGWQ) shows a compositional bias: polar residues. Residues 469–484 (QGNPNTTGNPANPGTP) are compositionally biased toward low complexity. Residues 485–496 (GTTGGNGTGNAG) show a composition bias toward gly residues.

This sequence belongs to the protein kinase superfamily. Ser/Thr protein kinase family.

The enzyme catalyses L-seryl-[protein] + ATP = O-phospho-L-seryl-[protein] + ADP + H(+). It carries out the reaction L-threonyl-[protein] + ATP = O-phospho-L-threonyl-[protein] + ADP + H(+). The chain is Serine/threonine-protein kinases drp72 from Corynebacterium efficiens (strain DSM 44549 / YS-314 / AJ 12310 / JCM 11189 / NBRC 100395).